We begin with the raw amino-acid sequence, 415 residues long: Lipoyl synthase, apicoplast (415 aa).

Positions Met-1–Cys-23 are cleaved as a signal peptide. [4Fe-4S] cluster-binding residues include Cys-153, Cys-158, Cys-164, Cys-179, Cys-183, Cys-186, and Ser-394. The Radical SAM core domain occupies Trp-165–Lys-383.

It belongs to the radical SAM superfamily. Lipoyl synthase family. It depends on [4Fe-4S] cluster as a cofactor.

Its subcellular location is the plastid. The protein resides in the apicoplast. It carries out the reaction [[Fe-S] cluster scaffold protein carrying a second [4Fe-4S](2+) cluster] + N(6)-octanoyl-L-lysyl-[protein] + 2 oxidized [2Fe-2S]-[ferredoxin] + 2 S-adenosyl-L-methionine + 4 H(+) = [[Fe-S] cluster scaffold protein] + N(6)-[(R)-dihydrolipoyl]-L-lysyl-[protein] + 4 Fe(3+) + 2 hydrogen sulfide + 2 5'-deoxyadenosine + 2 L-methionine + 2 reduced [2Fe-2S]-[ferredoxin]. It participates in protein modification; protein lipoylation via endogenous pathway; protein N(6)-(lipoyl)lysine from octanoyl-[acyl-carrier-protein]: step 2/2. Functionally, catalyzes the radical-mediated insertion of two sulfur atoms into the C-6 and C-8 positions of the octanoyl moiety bound to the lipoyl domains of lipoate-dependent enzymes, thereby converting the octanoylated domains into lipoylated derivatives. The protein is Lipoyl synthase, apicoplast of Plasmodium falciparum (isolate 3D7).